Reading from the N-terminus, the 220-residue chain is N-(5'-phosphoribosyl)anthranilate isomerase (220 aa).

It belongs to the TrpF family.

It carries out the reaction N-(5-phospho-beta-D-ribosyl)anthranilate = 1-(2-carboxyphenylamino)-1-deoxy-D-ribulose 5-phosphate. Its pathway is amino-acid biosynthesis; L-tryptophan biosynthesis; L-tryptophan from chorismate: step 3/5. In Bordetella petrii (strain ATCC BAA-461 / DSM 12804 / CCUG 43448), this protein is N-(5'-phosphoribosyl)anthranilate isomerase.